A 426-amino-acid polypeptide reads, in one-letter code: Glutamyl-tRNA reductase (426 aa).

Residues 51–54 (TCNR), Ser110, 115–117 (EAQ), and Gln121 each bind substrate. Residue Cys52 is the Nucleophile of the active site. 190–195 (GAGEMA) is an NADP(+) binding site.

It belongs to the glutamyl-tRNA reductase family. Homodimer.

It carries out the reaction (S)-4-amino-5-oxopentanoate + tRNA(Glu) + NADP(+) = L-glutamyl-tRNA(Glu) + NADPH + H(+). It functions in the pathway porphyrin-containing compound metabolism; protoporphyrin-IX biosynthesis; 5-aminolevulinate from L-glutamyl-tRNA(Glu): step 1/2. In terms of biological role, catalyzes the NADPH-dependent reduction of glutamyl-tRNA(Glu) to glutamate 1-semialdehyde (GSA). The sequence is that of Glutamyl-tRNA reductase from Desulfotalea psychrophila (strain LSv54 / DSM 12343).